Here is a 410-residue protein sequence, read N- to C-terminus: MKEVIAVKEITRFKTRTEEFSPYAWCKRMLENDPVSYHEGTDTWNVFKYEDVKRVLSDYKHFSSVRKRTTISVGTDSEEGSVPEKIQITESDPPDHRKRRSLLAAAFTPRSLQNWEPRIQEIADELIGQMDGGTEIDIVASLASPLPIIVMADLMGVPSKDRLLFKKWVDTLFLPFDREKQEEVDKLKQVAAKEYYQYLYPIVVQKRLNPADDIISDLLKSEVDGEMFTDDEVVRTTMLILGAGVETTSHLLANSFYSLLYDDKEVYQELHENLDLVPQAVEEMLRFRFNLIKLDRTVKEDNDLLGVELKEGDSVVVWMSAANMDEEMFEDPFTLNIHRPNNKKHLTFGNGPHFCLGAPLARLEAKIALTAFLKKFKHIEAVPSFQLEENLTDSATGQTLTSLPLKASRM.

Cys-355 contributes to the heme binding site.

It belongs to the cytochrome P450 family. Requires heme as cofactor.

The protein resides in the cytoplasm. The catalysed reaction is reduced 2[4Fe-4S]-[ferredoxin] + progesterone + O2 + 2 H(+) = 15beta-hydroxyprogesterone + oxidized 2[4Fe-4S]-[ferredoxin] + H2O. In terms of biological role, has the capacity to hydroxylate certain steroids in the 15-beta position. Also hydroxylates progesterone in the 11-alpha and 9-beta position. This chain is Cytochrome P450(MEG) (cyp106A2), found in Priestia megaterium (Bacillus megaterium).